We begin with the raw amino-acid sequence, 477 residues long: Aspartyl/glutamyl-tRNA(Asn/Gln) amidotransferase subunit B (477 aa).

It belongs to the GatB/GatE family. GatB subfamily. Heterotrimer of A, B and C subunits.

It catalyses the reaction L-glutamyl-tRNA(Gln) + L-glutamine + ATP + H2O = L-glutaminyl-tRNA(Gln) + L-glutamate + ADP + phosphate + H(+). The enzyme catalyses L-aspartyl-tRNA(Asn) + L-glutamine + ATP + H2O = L-asparaginyl-tRNA(Asn) + L-glutamate + ADP + phosphate + 2 H(+). Functionally, allows the formation of correctly charged Asn-tRNA(Asn) or Gln-tRNA(Gln) through the transamidation of misacylated Asp-tRNA(Asn) or Glu-tRNA(Gln) in organisms which lack either or both of asparaginyl-tRNA or glutaminyl-tRNA synthetases. The reaction takes place in the presence of glutamine and ATP through an activated phospho-Asp-tRNA(Asn) or phospho-Glu-tRNA(Gln). The protein is Aspartyl/glutamyl-tRNA(Asn/Gln) amidotransferase subunit B of Methylobacillus flagellatus (strain ATCC 51484 / DSM 6875 / VKM B-1610 / KT).